The chain runs to 216 residues: Large ribosomal subunit protein uL3 (216 aa).

The segment at 132-155 is disordered; sequence QDASHGNSRSHRVPGSIGQNQTPG. Glutamine 152 carries the N5-methylglutamine modification.

The protein belongs to the universal ribosomal protein uL3 family. In terms of assembly, part of the 50S ribosomal subunit. Forms a cluster with proteins L14 and L19. In terms of processing, methylated by PrmB.

Its function is as follows. One of the primary rRNA binding proteins, it binds directly near the 3'-end of the 23S rRNA, where it nucleates assembly of the 50S subunit. The chain is Large ribosomal subunit protein uL3 from Legionella pneumophila (strain Paris).